The sequence spans 128 residues: Small ribosomal subunit protein eS6 (128 aa).

The protein belongs to the eukaryotic ribosomal protein eS6 family.

This Thermoplasma volcanium (strain ATCC 51530 / DSM 4299 / JCM 9571 / NBRC 15438 / GSS1) protein is Small ribosomal subunit protein eS6.